Here is a 236-residue protein sequence, read N- to C-terminus: uncharacterized protein (236 aa).

The protein resides in the plastid. It is found in the chloroplast. This is an uncharacterized protein from Chlorella vulgaris (Green alga).